Here is a 365-residue protein sequence, read N- to C-terminus: UDP-N-acetylglucosamine--N-acetylmuramyl-(pentapeptide) pyrophosphoryl-undecaprenol N-acetylglucosamine transferase (365 aa).

Residues 17-19, N129, R167, S194, I250, 269-274, and Q295 contribute to the UDP-N-acetyl-alpha-D-glucosamine site; these read TGG and ALTVSE.

Belongs to the glycosyltransferase 28 family. MurG subfamily.

The protein localises to the cell inner membrane. The enzyme catalyses di-trans,octa-cis-undecaprenyl diphospho-N-acetyl-alpha-D-muramoyl-L-alanyl-D-glutamyl-meso-2,6-diaminopimeloyl-D-alanyl-D-alanine + UDP-N-acetyl-alpha-D-glucosamine = di-trans,octa-cis-undecaprenyl diphospho-[N-acetyl-alpha-D-glucosaminyl-(1-&gt;4)]-N-acetyl-alpha-D-muramoyl-L-alanyl-D-glutamyl-meso-2,6-diaminopimeloyl-D-alanyl-D-alanine + UDP + H(+). It functions in the pathway cell wall biogenesis; peptidoglycan biosynthesis. Cell wall formation. Catalyzes the transfer of a GlcNAc subunit on undecaprenyl-pyrophosphoryl-MurNAc-pentapeptide (lipid intermediate I) to form undecaprenyl-pyrophosphoryl-MurNAc-(pentapeptide)GlcNAc (lipid intermediate II). This Shewanella sediminis (strain HAW-EB3) protein is UDP-N-acetylglucosamine--N-acetylmuramyl-(pentapeptide) pyrophosphoryl-undecaprenol N-acetylglucosamine transferase.